A 488-amino-acid chain; its full sequence is Patatin-like protein 7 (488 aa).

Residues 23–49 (QRGGDGATAASKSANDYNNNDSLLTDM) form a disordered region. Residues 32–47 (ASKSANDYNNNDSLLT) are compositionally biased toward polar residues. The region spanning 101–301 (LSIDGGGMRG…AMSNPTAAAI (201 aa)) is the PNPLA domain. A GXGXXG motif is present at residues 105–110 (GGGMRG). Ser-145 acts as the Nucleophile in catalysis.

It belongs to the patatin family. In terms of tissue distribution, highly expressed in roots and at lower levels in leaves, stems, flowers and siliques.

It is found in the cell membrane. In terms of biological role, possesses non-specific lipolytic acyl hydrolase (LAH) activity. Catalyzes the hydrolysis of the galactolipids monogalactosyldiacylglycerol (MGDG) and digalactosyldiacylglycerol (DGDG), and the phoshpolipids phosphatidylcholine (PC), phosphatidylethanolamine (PE), phosphatidylglycerol (PG), phosphatidic acid (PA), phosphatidylserine (PS). Favors the release of fatty acid at the sn-2 position for PC. Possesses acyl-CoA thioesterase activity. Negatively affects disease resistance to the necrotic fungal pathogen Botrytis cinerea and the avirulent bacteria Pseudomonas syringae by promoting cell death and reducing the efficiency of the hypersensitive response, respectively. However, PLP2 contributes to resistance to cucumber mosaic virus (CMV), an obligate parasite inducing hypersensitive response. May negatively regulate oxylipin production, possibly via participating in membrane repair that includes removal of oxidatively modified lipids. Enzymatic products of PLP2 may influence cellulose content and cell elongation. This is Patatin-like protein 7 (PLP7) from Arabidopsis thaliana (Mouse-ear cress).